Consider the following 380-residue polypeptide: MKKQCVAMLLAGGKGSRLSGLTKNMAKPAVSFGGKYRIIDFTLSNCSNSGIDTVGILTQYQPLELNSYIGIGSAWDLDRYNGGVTVLPPYAESSEVKWYKGTASSIYENLNYLNQYDPEYVLILSGDHIYKMDYGKMLDYHIEKKADVTISVIEVGWEEASRFGIMKANPDGTITHFDEKPKFPKSNLASMGIYIFNWPLLKQYLEMDDQNPYSSHDFGKDIIPLLLEEKKKLSAYPFKGYWKDVGTVQSLWEANMDLLKEDSELKLFERKWKIYSVNPNQPPQFISSDAQVQDSLVNEGCVVYGNVSHSVLFQGVTVGKHTTVTSSVIMPDVTIGEHVVIENAIVPNGMVLPDGAVIRSEKDIEEVLLVSEEFVEKELI.

Residues Y99, G164, 179–180 (EK), and S190 each bind alpha-D-glucose 1-phosphate.

The protein belongs to the bacterial/plant glucose-1-phosphate adenylyltransferase family. In terms of assembly, homotetramer.

It carries out the reaction alpha-D-glucose 1-phosphate + ATP + H(+) = ADP-alpha-D-glucose + diphosphate. It participates in glycan biosynthesis; glycogen biosynthesis. Involved in the biosynthesis of ADP-glucose, a building block required for the elongation reactions to produce glycogen. Catalyzes the reaction between ATP and alpha-D-glucose 1-phosphate (G1P) to produce pyrophosphate and ADP-Glc. This is Glucose-1-phosphate adenylyltransferase from Bacillus subtilis (strain 168).